A 560-amino-acid chain; its full sequence is NAD-dependent malic enzyme (560 aa).

Catalysis depends on tyrosine 100, which acts as the Proton donor. Arginine 153 lines the NAD(+) pocket. Lysine 171 (proton acceptor) is an active-site residue. 3 residues coordinate a divalent metal cation: glutamate 242, aspartate 243, and aspartate 266. 2 residues coordinate NAD(+): aspartate 266 and asparagine 413.

It belongs to the malic enzymes family. As to quaternary structure, homotetramer. Requires Mg(2+) as cofactor. The cofactor is Mn(2+).

It catalyses the reaction (S)-malate + NAD(+) = pyruvate + CO2 + NADH. The catalysed reaction is oxaloacetate + H(+) = pyruvate + CO2. The protein is NAD-dependent malic enzyme of Psychromonas ingrahamii (strain DSM 17664 / CCUG 51855 / 37).